The chain runs to 67 residues: Small ribosomal subunit protein bS21 (67 aa).

The protein belongs to the bacterial ribosomal protein bS21 family.

The polypeptide is Small ribosomal subunit protein bS21 (Nitratidesulfovibrio vulgaris (strain DSM 19637 / Miyazaki F) (Desulfovibrio vulgaris)).